The primary structure comprises 1199 residues: MNNLAGHLVKYGKHRVRRSYSRIKEVLDLPNLIEVQTDSYKWFLDEGLREMFDDIMPIEDFQGKLSLEFVDYQLLEPKYTVEEARQHDANYSAPLHVTLRLINHETGEIKSQDVFFGDFPLMTKQGTFIINGAERVIVSQLVRSPGVYFNSELDKNGRTNYGTTVIPNRGAWLEYETDAKNVAYVRIDRTRKIPLTELIRALGYGSDNEIVEILGSNSDSLMLTLEKDVHKNMDDSRVEESLKDIYERLRPGEPKTADSSRSLLTARFFDPKRYDLAPVGRYKINKKLDLKTRLLNLTVAETLADPDTGEIIVNKDEVIDKQVMDKLAPYLARDDFKTFTFHPSEEGVVQEPMTLQIVKVYSPKDPEKVVNVIGNANVDIQFKHITPADIVASMNYFFNLQEGMGSTDDIDHLGNRRTRSVGELLQNQFRIGLSRMERVVRERMSIQDTSTVTPQQLINIRPVVASIKEFFGSSQLSQFMDQTNPLGELSHKRRFSALGPGGLTRDRAGYEVRDVHYTHYGRMCPIETPEGPNIGLINSLSSYARINKYGFVETPYRRVSWETHKVTDKIDYLTADEEDNYVIAQANSPLNDDGSFVDDVVMARKKDDDVEISTEKVDYMDVSPKQVVAVATACIPFLENDDSNRALMGANMQRQAVPLIKPHAPLVGTGIEYKAAHDSGVALISEHEGTVEYVDAREIRVRRDDGSLDKYKLMKFHRSNGGKNYNQTPIVRVGDRVDADEVLADGPAMENGELALGQNPLIAFMTWDGYNFEDAIAINERLVKEDVYTSIHIEEHESEARDTKLGPEEITREIPNVGEDALKNLDEFGIIRIGAEVKDGDILVGKVTPKGVTELSAEERLLHAIFGEKAREVRDTSLRVPHGAGGIVQDVKIFTREGGDELSPGVNMMVRVYIAQKRKLQVGDKMAGRHGNKGTVSVVIPEEDMPFMPDGTPIDIMLSPMGVPSRMNIGQVLDLHLGMAARKLGIHVASPVFDGARDEDIWSALQEAGLPGDGKTVLYDGRTGEAFDNRIAVGVMYYLKLAHMVDDKIHARSIGPYSLVTQQPLGGKAQFGGQRFGEMEVWALEAYGAAYTLQEILTYKSDDVVGRVKTYEAIVKGEPIPKPGVPESFRVLVKELQALGMDMKVLDADKNEIELRDMDDEDDDIVNVDALKKFAKEQEEKKAKEAEQETAEKEETKTE.

The segment at 1177–1199 (EQEEKKAKEAEQETAEKEETKTE) is disordered.

The protein belongs to the RNA polymerase beta chain family. In terms of assembly, the RNAP catalytic core consists of 2 alpha, 1 beta, 1 beta' and 1 omega subunit. When a sigma factor is associated with the core the holoenzyme is formed, which can initiate transcription.

It catalyses the reaction RNA(n) + a ribonucleoside 5'-triphosphate = RNA(n+1) + diphosphate. Its function is as follows. DNA-dependent RNA polymerase catalyzes the transcription of DNA into RNA using the four ribonucleoside triphosphates as substrates. The polypeptide is DNA-directed RNA polymerase subunit beta (Ligilactobacillus salivarius (strain UCC118) (Lactobacillus salivarius)).